Here is a 583-residue protein sequence, read N- to C-terminus: Kelch-like protein 38 (583 aa).

The region spanning 34-101 (TDVILCTEDK…IYTGSITITM (68 aa)) is the BTB domain. The BACK domain occupies 136–237 (CLSMIRLSEI…HPTYLFQFIA (102 aa)). Kelch repeat units follow at residues 285 to 332 (TLVV…CIHS), 333 to 385 (ILYV…SYLH), 386 to 433 (FIFA…ANDQ), 435 to 481 (IYVF…VIED), 482 to 523 (KIYI…VINN), and 525 to 575 (LYVT…PLIC).

The chain is Kelch-like protein 38 (klhl38) from Danio rerio (Zebrafish).